Here is a 284-residue protein sequence, read N- to C-terminus: Tropomyosin (284 aa).

Positions 1-273 form a coiled coil; that stretch reads MEAIKKKMQA…KEKYKSISDE (273 aa).

The protein belongs to the tropomyosin family. In terms of assembly, homodimer. In terms of tissue distribution, ubiquitous, but especially prevalent in the anterior muscle bundles associated with legs. Expression in the mid and posterior regions is probably related to the numerous, small muscle bundles associated with the digestive and reproductive systems (at protein level).

Tropomyosin, in association with the troponin complex, plays a central role in the calcium dependent regulation of muscle contraction. This is Tropomyosin from Psoroptes ovis (Sheep scab mite).